Here is a 526-residue protein sequence, read N- to C-terminus: Cytochrome P450 4e2 (526 aa).

Residues Glu-307 and Cys-444 each contribute to the heme site.

The protein belongs to the cytochrome P450 family. It depends on heme as a cofactor.

The protein localises to the endoplasmic reticulum membrane. Its subcellular location is the microsome membrane. Functionally, may be involved in the metabolism of insect hormones and in the breakdown of synthetic insecticides. The sequence is that of Cytochrome P450 4e2 (Cyp4e2) from Drosophila melanogaster (Fruit fly).